The following is an 88-amino-acid chain: Large ribosomal subunit protein bL31 (88 aa).

Positions 67-88 (MGSVDNATSEKKSATDETSKES) are disordered. Residues 74–88 (TSEKKSATDETSKES) show a composition bias toward basic and acidic residues.

The protein belongs to the bacterial ribosomal protein bL31 family. Type A subfamily. In terms of assembly, part of the 50S ribosomal subunit.

Binds the 23S rRNA. The chain is Large ribosomal subunit protein bL31 from Synechococcus sp. (strain CC9311).